The sequence spans 87 residues: UPF0367 protein P9303_26451 (87 aa).

The protein belongs to the UPF0367 family.

In Prochlorococcus marinus (strain MIT 9303), this protein is UPF0367 protein P9303_26451.